The chain runs to 538 residues: Probable cytochrome P450 309a2 (538 aa).

A heme-binding site is contributed by Cys483.

It belongs to the cytochrome P450 family. Requires heme as cofactor.

It is found in the endoplasmic reticulum membrane. It localises to the microsome membrane. Functionally, may be involved in the metabolism of insect hormones and in the breakdown of synthetic insecticides. This Drosophila melanogaster (Fruit fly) protein is Probable cytochrome P450 309a2 (Cyp309a2).